Consider the following 140-residue polypeptide: Large ribosomal subunit protein uL14 (140 aa).

It belongs to the universal ribosomal protein uL14 family.

The polypeptide is Large ribosomal subunit protein uL14 (rpl-23) (Caenorhabditis elegans).